A 91-amino-acid polypeptide reads, in one-letter code: Large ribosomal subunit protein bL27 (91 aa).

Over residues 1–10 (MAQKKGGGST) the composition is skewed to gly residues. A disordered region spans residues 1–20 (MAQKKGGGSTRNGRDSQPKM).

This sequence belongs to the bacterial ribosomal protein bL27 family.

This Verminephrobacter eiseniae (strain EF01-2) protein is Large ribosomal subunit protein bL27.